A 218-amino-acid polypeptide reads, in one-letter code: Small ribosomal subunit protein mS34 (218 aa).

Positions 178–218 (RQKNGDPSTEEPMLSLERIRTDPWDYPENQEAKKKTKGTAV) are disordered.

The protein belongs to the mitochondrion-specific ribosomal protein mS34 family. Component of the mitochondrial ribosome small subunit (28S) which comprises a 12S rRNA and about 30 distinct proteins.

It localises to the mitochondrion. Functionally, required for mitochondrial translation, plays a role in maintaining the stability of the small ribosomal subunit and the 12S rRNA that are required for mitoribosome formation. In Bos taurus (Bovine), this protein is Small ribosomal subunit protein mS34.